The following is a 572-amino-acid chain: DNA polymerase (572 aa).

The interval 1–222 (MSRKMFSCDF…LPMDKEIRKA (222 aa)) is 3'-5' exonuclease and strand displacement activities. An interaction with the primer terminal protein region spans residues 56-66 (YFHNLKFDGAF). The Mg(2+) site is built by Asp-142 and Asp-166. The segment at 223 to 226 (YRGG) is DNA-binding; Involved in the formation of a stable complex between TP and phi29 DNA polymerase. Residues 227 to 572 (FTWLNDKYKE…VLVDSVFTIK (346 aa)) are initiation, polymerization and pyrophosphorolytic activities. Mg(2+) is bound by residues Asp-246 and Val-247. The 5-methyl-UTP site is built by Tyr-251, Lys-368, and Lys-380. Residues Asp-453 and Asp-455 each contribute to the Mg(2+) site. Asp-455 contributes to the 5-methyl-UTP binding site.

The protein belongs to the DNA polymerase type-B family. As to quaternary structure, interacts with the primer terminal protein; this interaction allows the initiation of TP-primed DNA replication at both viral DNA ends. Interacts with DNA. The cofactor is Mg(2+).

It catalyses the reaction DNA(n) + a 2'-deoxyribonucleoside 5'-triphosphate = DNA(n+1) + diphosphate. In terms of biological role, polymerase responsible for protein-primed viral DNA replication by strand displacement with high processivity and fidelity. To start replication, the DNA polymerase forms a heterodimer with a free primer terminal protein (TP), recognizes the replication origins at both 5' ends of the linear chromosome, and initiates replication using as primer the OH-group of Ser-232 of the TP. This polymerase possesses three enzymatic activities: DNA synthesis (polymerase), primer terminal protein (TP) deoxynucleotidylation, which is the formation of a covalent linkage (phosphoester) between the hydroxyl group of a specific serine residue in TP and 5'-dAMP, a reaction directed by the third T at the 3' end, and 3' to 5' exonuclease activity. Exonuclease activity has a proofreading purpose. Since the polymerase initiates the replication on the third thymine, the TP-dAMP initiation product translocates backwards to recover the template information of the 2 terminal nucleotide (sliding back-mechanism). This is DNA polymerase from Bacillus phage Nf (Bacteriophage Nf).